Consider the following 651-residue polypeptide: ATP synthase F(1) complex catalytic subunit beta, mitochondrial (651 aa).

The transit peptide at 1–30 (MFVARRLSKNITQISKTAVKTSVRAVPVRG) directs the protein to the mitochondrion. Positions 259, 260, 261, 262, 263, and 264 each coordinate ADP. Glycine 259 contributes to the ATP binding site. 5 residues coordinate phosphate: glycine 259, valine 260, glycine 261, lysine 262, and threonine 263. ATP-binding residues include glycine 261, lysine 262, threonine 263, and valine 264. Threonine 263 contacts Mg(2+). Residue glutamate 288 coordinates Mg(2+). Arginine 289 is an ATP binding site.

Belongs to the ATPase alpha/beta chains family. Homotrimer. Component of the ATP synthase complex composed at least of ATP5F1A/subunit alpha, ATP5F1B/subunit beta, ATP5MC1/subunit c (homooctomer), MT-ATP6/subunit a, MT-ATP8/subunit 8, ATP5ME/subunit e, ATP5MF/subunit f, ATP5MG/subunit g, ATP5MK/subunit k, ATP5MJ/subunit j, ATP5F1C/subunit gamma, ATP5F1D/subunit delta, ATP5F1E/subunit epsilon, ATP5PF/subunit F6, ATP5PB/subunit b, ATP5PD/subunit d, ATP5PO/subunit OSCP. ATP synthase complex consists of a soluble F(1) head domain (subunits alpha(3) and beta(3)) - the catalytic core - and a membrane F(0) domain - the membrane proton channel (subunits c, a, 8, e, f, g, k and j). These two domains are linked by a central stalk (subunits gamma, delta, and epsilon) rotating inside the F1 region and a stationary peripheral stalk (subunits F6, b, d, and OSCP).

It localises to the mitochondrion inner membrane. It catalyses the reaction ATP + H2O + 4 H(+)(in) = ADP + phosphate + 5 H(+)(out). Catalytic subunit beta, of the mitochondrial membrane ATP synthase complex (F(1)F(0) ATP synthase or Complex V) that produces ATP from ADP in the presence of a proton gradient across the membrane which is generated by electron transport complexes of the respiratory chain. ATP synthase complex consist of a soluble F(1) head domain - the catalytic core - and a membrane F(1) domain - the membrane proton channel. These two domains are linked by a central stalk rotating inside the F(1) region and a stationary peripheral stalk. During catalysis, ATP synthesis in the catalytic domain of F(1) is coupled via a rotary mechanism of the central stalk subunits to proton translocation. In vivo, can only synthesize ATP although its ATP hydrolase activity can be activated artificially in vitro. With the subunit alpha (ATP5F1A), forms the catalytic core in the F(1) domain. In Dictyostelium discoideum (Social amoeba), this protein is ATP synthase F(1) complex catalytic subunit beta, mitochondrial.